The primary structure comprises 973 residues: Nuclear factor NF-kappa-B p105 subunit (973 aa).

Positions 38-245 (ADGPYLQILE…DAIYDSKAPN (208 aa)) constitute an RHD domain. Residue cysteine 60 is modified to S-nitrosocysteine; alternate. A lipid anchor (S-(15-deoxy-Delta12,14-prostaglandin J2-9-yl)cysteine; alternate) is attached at cysteine 60. A Glycyl lysine isopeptide (Lys-Gly) (interchain with G-Cter in SUMO2) cross-link involves residue lysine 324. Residue serine 336 is modified to Phosphoserine. A Nuclear localization signal motif is present at residues 359–364 (QRKRQK). Positions 371–394 (DSFGGGSGAGAGGGGMFGSGGGGG) are GRR. The disordered stretch occupies residues 434-467 (TINTKFKNEPRDCAKSDDREILNPPEKETQGEGP). The interval 435-973 (INTKFKNEPR…GQDGPIEGKI (539 aa)) is interaction with CFLAR. The span at 439–463 (FKNEPRDCAKSDDREILNPPEKETQ) shows a compositional bias: basic and acidic residues. Position 440 is an N6-acetyllysine (lysine 440). The residue at position 449 (serine 449) is a Phosphoserine. 6 ANK repeats span residues 540–570 (NGDSVLHLAIIHLHAQLVRDLLEVTSGSISD), 579–608 (LYQTPLHLAVITKQEDVVEDLLRVGADLSL), 612–641 (WGNSVLHLAAKEGHDKILGVLLKNSKAALL), 648–677 (EGLNAIHIAVMSNSLSCLQLLVAAGAEVNA), 682–711 (SGRTALHLAVEYDNISLAGCLLLEGDALVD), and 716–745 (DGTTPLHIAAGRGSTRLAALLKAAGADPLV). Residues 648–682 (EGLNAIHIAVMSNSLSCLQLLVAAGAEVNAQEQKS) are essential for interaction with HIF1AN. Residue asparagine 676 is modified to (3S)-3-hydroxyasparagine; by HIF1AN. Serine 757 is modified (phosphoserine). One copy of the ANK 7 repeat lies at 769–799 (PGTTPLDMAANWQVFDILNGKPYEPVFTSDD). The 88-residue stretch at 803–890 (QGDIKQLTED…EAIEVIQAAF (88 aa)) folds into the Death domain. Residue serine 898 is modified to Phosphoserine. At serine 912 the chain carries Phosphoserine; by GSK3-beta; in vitro. At serine 928 the chain carries Phosphoserine. Serine 932 and serine 937 each carry phosphoserine; by IKKB. The residue at position 942 (serine 942) is a Phosphoserine. Threonine 948 is modified (phosphothreonine).

Component of the NF-kappa-B p65-p50 complex. Homodimer; component of the NF-kappa-B p50-p50 complex. Component of the NF-kappa-B p105-p50 complex. Component of the NF-kappa-B p50-c-Rel complex. Component of a complex consisting of the NF-kappa-B p50-p50 homodimer and BCL3. Also interacts with MAP3K8. NF-kappa-B p50 subunit interacts with NCOA3 coactivator, which may coactivate NF-kappa-B dependent expression via its histone acetyltransferase activity. Interacts with TSC22D3; this interaction prevents nuclear translocation and DNA-binding. Interacts with SPAG9 and UNC5CL. NFKB1/p105 interacts with CFLAR; the interaction inhibits p105 processing into p50. NFKB1/p105 forms a ternary complex with MAP3K8 and TNIP2. Interacts with GSK3B; the interaction prevents processing of p105 to p50. NFKB1/p50 interacts with NFKBIE. NFKB1/p50 interacts with NFKBIZ. Nuclear factor NF-kappa-B p50 subunit interacts with NFKBID. Directly interacts with MEN1. Interacts with HIF1AN. Interacts with FEM1A; interaction is direct. Generation of the NF-kappa-B p50 (Nuclear factor NF-kappa-B p50 subunit) transcription factor takes place both cotranslationally and post-translationally via non-mutually exclusive mechanisms. A cotranslational processing allows the production of both p50 and p105 (Nuclear factor NF-kappa-B p105 subunit) from a single NFKB1 mRNA. While translation occurs, the particular unfolded structure after the GRR repeat region acts as a substrate for the proteasome, promoting degradation of the C-terminus. The GRR acts as a proteasomal 'stop signal', protecting the region upstream of the GRR from degradation and promoting generation of p50. It is unclear if limited proteasome degradation during cotranslational processing depends on ubiquitination. NF-kappa-B p50 is also generated post-translationally following ubiquitination by the KPC complex, leading to limited processing by the proteasome downstream of the GRR region, thereby generating p50. Post-translationally, phosphorylation at the C-terminus by IKBKB/IKKB acts as a signal for ubiquitination and promotes either complete degradation or processing to generate the NF-kappa-B p50 (Nuclear factor NF-kappa-B p50 subunit). Phosphorylation at Ser-912 primes p105 for proteolytic processing in response to TNF-alpha stimulation. Phosphorylation at Ser-928, Ser-932 and Ser-937 are required for BTRC/BTRCP-mediated ubiquitination and proteolysis. Phosphorylation at Ser-932 is also required for ubiquitination by the KPC complex and limited processing to generate NF-kappa-B p50 (Nuclear factor NF-kappa-B p50 subunit). In terms of processing, polyubiquitinated at multiple Lys residues in the C-terminus. Polyubiquitinated by the SCF(FBXW11) and SCF(BTRC) complexes following phosphorylation at Ser-928, Ser-932 and Ser-937, leading to its complete degradation. In contrast, polyubiquitination by the KPC complex following phosphorylation at Ser-932 leads to limited proteosomal processing and generation of the active NF-kappa-B p50 (Nuclear factor NF-kappa-B p50 subunit). S-nitrosylation of Cys-60 affects DNA binding. Post-translationally, the covalent modification of cysteine by 15-deoxy-Delta12,14-prostaglandin-J2 is autocatalytic and reversible. It may occur as an alternative to other cysteine modifications, such as S-nitrosylation and S-palmitoylation.

The protein resides in the cytoplasm. It localises to the nucleus. Functionally, NF-kappa-B is a pleiotropic transcription factor present in almost all cell types and is the endpoint of a series of signal transduction events that are initiated by a vast array of stimuli related to many biological processes such as inflammation, immunity, differentiation, cell growth, tumorigenesis and apoptosis. NF-kappa-B is a homo- or heterodimeric complex formed by the Rel-like domain-containing proteins RELA/p65, RELB, NFKB1/p105, NFKB1/p50, REL and NFKB2/p52 and the heterodimeric p65-p50 complex appears to be most abundant one. The dimers bind at kappa-B sites in the DNA of their target genes and the individual dimers have distinct preferences for different kappa-B sites that they can bind with distinguishable affinity and specificity. Different dimer combinations act as transcriptional activators or repressors, respectively. NF-kappa-B is controlled by various mechanisms of post-translational modification and subcellular compartmentalization as well as by interactions with other cofactors or corepressors. NF-kappa-B complexes are held in the cytoplasm in an inactive state complexed with members of the NF-kappa-B inhibitor (I-kappa-B) family. In a conventional activation pathway, I-kappa-B is phosphorylated by I-kappa-B kinases (IKKs) in response to different activators, subsequently degraded thus liberating the active NF-kappa-B complex which translocates to the nucleus. NF-kappa-B heterodimeric p65-p50 and RelB-p50 complexes are transcriptional activators. The NF-kappa-B p50-p50 homodimer is a transcriptional repressor, but can act as a transcriptional activator when associated with BCL3. NFKB1 appears to have dual functions such as cytoplasmic retention of attached NF-kappa-B proteins by p105 and generation of p50 by a cotranslational processing. The proteasome-mediated process ensures the production of both p50 and p105 and preserves their independent function, although processing of NFKB1/p105 also appears to occur post-translationally. p50 binds to the kappa-B consensus sequence 5'-GGRNNYYCC-3', located in the enhancer region of genes involved in immune response and acute phase reactions. In a complex with MAP3K8, NFKB1/p105 represses MAP3K8-induced MAPK signaling; active MAP3K8 is released by proteasome-dependent degradation of NFKB1/p105. In terms of biological role, P105 is the precursor of the active p50 subunit (Nuclear factor NF-kappa-B p50 subunit) of the nuclear factor NF-kappa-B. Acts as a cytoplasmic retention of attached NF-kappa-B proteins by p105. Constitutes the active form, which associates with RELA/p65 to form the NF-kappa-B p65-p50 complex to form a transcription factor. Together with RELA/p65, binds to the kappa-B consensus sequence 5'-GGRNNYYCC-3', located in the enhancer region of genes involved in immune response and acute phase reactions. This is Nuclear factor NF-kappa-B p105 subunit (Nfkb1) from Rattus norvegicus (Rat).